The sequence spans 190 residues: MPKASDIKKNTAIEYNNNVYIIRDIERSVPQGRAGGSLYRMRMYDVVSGSKIDQTFKDNEMLPLADLVRRNVMFSYIDGEQYVFMDNEDYTPYNLDKDSIADEILLINEDTQGLQVVLVDGAPVALELPSSVELEIVETSPSIKGGSATARTKPAILSTGLTVQVPEHISTGDKIKVNTAEHKFMGRADK.

The protein belongs to the elongation factor P family.

This chain is Elongation factor P-like protein, found in Psychromonas ingrahamii (strain DSM 17664 / CCUG 51855 / 37).